Consider the following 237-residue polypeptide: uncharacterized protein (237 aa).

Residue 21–28 (GCDGSGKS) participates in ATP binding.

It to E.coli YghR and YghT.

This is an uncharacterized protein from Escherichia coli (strain K12).